The following is a 396-amino-acid chain: Queuine tRNA-ribosyltransferase catalytic subunit 1 (396 aa).

Catalysis depends on Asp99, which acts as the Proton acceptor. Residues 99–103 (DSGGF), Asp153, Gln196, and Gly223 contribute to the queuine site. Residues 254–260 (GVGYATD) form an RNA binding region. Asp273 functions as the Nucleophile in the catalytic mechanism. An RNA binding; important for wobble base 34 recognition region spans residues 278 to 282 (TRTAR). Zn(2+) is bound by residues Cys311, Cys313, Cys316, and His341.

It belongs to the queuine tRNA-ribosyltransferase family. In terms of assembly, heterodimer of a catalytic subunit qtrt1 and an accessory subunit qtrt2. The cofactor is Zn(2+).

Its subcellular location is the cytoplasm. It localises to the mitochondrion outer membrane. The enzyme catalyses guanosine(34) in tRNA + queuine = queuosine(34) in tRNA + guanine. Functionally, catalytic subunit of the queuine tRNA-ribosyltransferase (TGT) that catalyzes the base-exchange of a guanine (G) residue with queuine (Q) at position 34 (anticodon wobble position) in tRNAs with GU(N) anticodons (tRNA-Asp, -Asn, -His and -Tyr), resulting in the hypermodified nucleoside queuosine (7-(((4,5-cis-dihydroxy-2-cyclopenten-1-yl)amino)methyl)-7-deazaguanosine). Catalysis occurs through a double-displacement mechanism. The nucleophile active site attacks the C1' of nucleotide 34 to detach the guanine base from the RNA, forming a covalent enzyme-RNA intermediate. The proton acceptor active site deprotonates the incoming queuine, allowing a nucleophilic attack on the C1' of the ribose to form the product. This Xenopus laevis (African clawed frog) protein is Queuine tRNA-ribosyltransferase catalytic subunit 1.